The chain runs to 76 residues: ISLLTDFCIGFHSTQGWELMIGSVYKDFGFTPNDQILSCLVSIFPVILDTIFKYSIFRYLNRVSPSLVVIYHSMKE.

A helical transmembrane segment spans residues 35–52 (QILSCLVSIFPVILDTIF).

Belongs to the CemA family.

It is found in the plastid. It localises to the chloroplast inner membrane. The catalysed reaction is K(+)(in) + H(+)(out) = K(+)(out) + H(+)(in). Its function is as follows. Contributes to K(+)/H(+) antiport activity by supporting proton efflux to control proton extrusion and homeostasis in chloroplasts in a light-dependent manner to modulate photosynthesis. Prevents excessive induction of non-photochemical quenching (NPQ) under continuous-light conditions. Indirectly promotes efficient inorganic carbon uptake into chloroplasts. In Vicia faba (Broad bean), this protein is Potassium/proton antiporter CemA.